A 269-amino-acid chain; its full sequence is Cytochrome c oxidase subunit 3 (269 aa).

Helical transmembrane passes span 7 to 29, 51 to 71, 90 to 110, 127 to 147, 167 to 187, 205 to 225, and 247 to 267; these read GYLQ…TSFS, IILS…DIIA, GFLL…WAYL, VGID…ILLA, TLYG…FQFL, FYSL…MLVI, and ILYL…VYWW.

The protein belongs to the cytochrome c oxidase subunit 3 family. In terms of assembly, component of the cytochrome c oxidase (complex IV, CIV), a multisubunit enzyme composed of a catalytic core of 3 subunits and several supernumerary subunits. The complex exists as a monomer or a dimer and forms supercomplexes (SCs) in the inner mitochondrial membrane with ubiquinol-cytochrome c oxidoreductase (cytochrome b-c1 complex, complex III, CIII).

It is found in the mitochondrion inner membrane. It carries out the reaction 4 Fe(II)-[cytochrome c] + O2 + 8 H(+)(in) = 4 Fe(III)-[cytochrome c] + 2 H2O + 4 H(+)(out). Component of the cytochrome c oxidase, the last enzyme in the mitochondrial electron transport chain which drives oxidative phosphorylation. The respiratory chain contains 3 multisubunit complexes succinate dehydrogenase (complex II, CII), ubiquinol-cytochrome c oxidoreductase (cytochrome b-c1 complex, complex III, CIII) and cytochrome c oxidase (complex IV, CIV), that cooperate to transfer electrons derived from NADH and succinate to molecular oxygen, creating an electrochemical gradient over the inner membrane that drives transmembrane transport and the ATP synthase. Cytochrome c oxidase is the component of the respiratory chain that catalyzes the reduction of oxygen to water. Electrons originating from reduced cytochrome c in the intermembrane space (IMS) are transferred via the dinuclear copper A center (CU(A)) of subunit 2 and heme A of subunit 1 to the active site in subunit 1, a binuclear center (BNC) formed by heme A3 and copper B (CU(B)). The BNC reduces molecular oxygen to 2 water molecules using 4 electrons from cytochrome c in the IMS and 4 protons from the mitochondrial matrix. This chain is Cytochrome c oxidase subunit 3 (COX3), found in Candida parapsilosis (Yeast).